Reading from the N-terminus, the 625-residue chain is Chaperone protein DnaK (625 aa).

Residue Thr-197 is modified to Phosphothreonine; by autocatalysis. The segment at 598-625 is disordered; that stretch reads MYKKDDNASGEQSGGKKKDDDVIDAEVE.

This sequence belongs to the heat shock protein 70 family.

Acts as a chaperone. This chain is Chaperone protein DnaK, found in Campylobacter curvus (strain 525.92).